A 60-amino-acid polypeptide reads, in one-letter code: MSEKTIKVTLVKSVIGTKQSHRATVRGLGLRRTNHCVELQDTPEIRGMVNKVSYLLKCEG.

It belongs to the universal ribosomal protein uL30 family. In terms of assembly, part of the 50S ribosomal subunit.

This is Large ribosomal subunit protein uL30 from Aromatoleum aromaticum (strain DSM 19018 / LMG 30748 / EbN1) (Azoarcus sp. (strain EbN1)).